Consider the following 340-residue polypeptide: MEF2 transcription factor homolog (340 aa).

One can recognise an MADS-box domain in the interval 1 to 61 (MGRKKIQITR…NKLFQYASTD (61 aa)). 4 disordered regions span residues 90-112 (RKEGNQGGGNSDDESPGPSTSPV), 193-217 (NQRNDPLSSTSVAPSSSSSKHLDFP), 258-283 (LQQRPVSQPAPSISNSSTNGISNGTS), and 312-340 (PNTYVKMEPHSPPEKRPRITTEWRPQQLT). A compositionally biased stretch (low complexity) spans 200–211 (SSTSVAPSSSSS). Over residues 258 to 268 (LQQRPVSQPAP) the composition is skewed to polar residues. The segment covering 269-283 (SISNSSTNGISNGTS) has biased composition (low complexity). Positions 318–332 (MEPHSPPEKRPRITT) are enriched in basic and acidic residues.

It belongs to the MEF2 family. As to quaternary structure, interacts with histone deacetylase hda-4 isoform b.

The protein resides in the nucleus. In terms of biological role, transcription regulator. Binds specifically to the MEF2 element, 5'-[TC]TA[AT][AT][AT][AT]TA[AG]-3' in the regulatory elements of target genes, such as chemoreceptors str-1 and srh-234. Involved in transduction of sensory signals, together with egl-4, kin-29 and hda-4; binding to histone deacetylase hda-4 enables negative modulation of chemoreceptor gene expression in chemosensory neurons. In response to starvation, negatively modulates expression of chemoreceptor srh-234 in ADL sensory neurons, acting in concert with basic helix-loop-helix (bHLH) transcription factors. Plays a role in regulating muscle sensitivity to acetylcholine (ACh) and the magnitude of presynaptic ACh release via a retrograde signal, perhaps by indirectly decreasing Ras-related protein Rab-3 activity. This chain is MEF2 transcription factor homolog, found in Caenorhabditis elegans.